The chain runs to 173 residues: Xanthine-guanine phosphoribosyltransferase (173 aa).

Residues 48–49 (RG) and 107–115 (DDLVDTGKT) contribute to the 5-phospho-alpha-D-ribose 1-diphosphate site. Residue D108 coordinates Mg(2+). 2 residues coordinate guanine: D111 and I154. The xanthine site is built by D111 and I154. GMP contacts are provided by residues 111-115 (DTGKT) and 153-154 (WI).

It belongs to the purine/pyrimidine phosphoribosyltransferase family. XGPT subfamily. In terms of assembly, homotetramer. Requires Mg(2+) as cofactor.

Its subcellular location is the cell inner membrane. It catalyses the reaction GMP + diphosphate = guanine + 5-phospho-alpha-D-ribose 1-diphosphate. The catalysed reaction is XMP + diphosphate = xanthine + 5-phospho-alpha-D-ribose 1-diphosphate. It carries out the reaction IMP + diphosphate = hypoxanthine + 5-phospho-alpha-D-ribose 1-diphosphate. The protein operates within purine metabolism; GMP biosynthesis via salvage pathway; GMP from guanine: step 1/1. It functions in the pathway purine metabolism; XMP biosynthesis via salvage pathway; XMP from xanthine: step 1/1. Its function is as follows. Purine salvage pathway enzyme that catalyzes the transfer of the ribosyl-5-phosphate group from 5-phospho-alpha-D-ribose 1-diphosphate (PRPP) to the N9 position of the 6-oxopurines guanine and xanthine to form the corresponding ribonucleotides GMP (guanosine 5'-monophosphate) and XMP (xanthosine 5'-monophosphate), with the release of PPi. To a lesser extent, also acts on hypoxanthine. The polypeptide is Xanthine-guanine phosphoribosyltransferase (Rhodopseudomonas palustris (strain ATCC BAA-98 / CGA009)).